The following is a 905-amino-acid chain: DNA gyrase subunit A (905 aa).

A Topo IIA-type catalytic domain is found at 35-524 (IPDVRDGLKP…GEFDQDIEDL (490 aa)). Tyrosine 123 serves as the catalytic O-(5'-phospho-DNA)-tyrosine intermediate. Residues 551–557 (QKRGGKG) carry the GyrA-box motif.

The protein belongs to the type II topoisomerase GyrA/ParC subunit family. Heterotetramer, composed of two GyrA and two GyrB chains. In the heterotetramer, GyrA contains the active site tyrosine that forms a transient covalent intermediate with DNA, while GyrB binds cofactors and catalyzes ATP hydrolysis.

It is found in the cytoplasm. It catalyses the reaction ATP-dependent breakage, passage and rejoining of double-stranded DNA.. In terms of biological role, a type II topoisomerase that negatively supercoils closed circular double-stranded (ds) DNA in an ATP-dependent manner to modulate DNA topology and maintain chromosomes in an underwound state. Negative supercoiling favors strand separation, and DNA replication, transcription, recombination and repair, all of which involve strand separation. Also able to catalyze the interconversion of other topological isomers of dsDNA rings, including catenanes and knotted rings. Type II topoisomerases break and join 2 DNA strands simultaneously in an ATP-dependent manner. The polypeptide is DNA gyrase subunit A (Rickettsia prowazekii (strain Madrid E)).